The sequence spans 1207 residues: MKVIDEKPEDEEEEKDSGSKCKTPSSCTKKRVREKEEDLPPICHGWLIVCEGNPTKMMNKEVKLPWHAGYCVFEPRQSTMSCYKQEYPFIAGRMLHRNRTVRMDGDRSAFARHWGLLPEHYPSPPITGPHTIARSYTRPPKDRLPTKERFFSISRIPSRLTKFSTVRGMSIEFFDAIHDETNSGGAQVGGESLDRRGWSGASTGNRTTLTASVHNNLMNGRMSSSSHNLSTRLSGSTQNLNQPTNAYGNLLSRPFRSNPLKRTKSVSKMEKSLAEANQHSLHRVDASNTPSRDSSLYAQPPARRHLSQPAREGSLRACRSHESLLSSAHSTHMIELNEDNRLHPVHPSIFEVPNCFRLASTYYSCRTPLERAKWMENLRKTMNPRRDQQRRTENSMLIWILEAKGLPAKRKYYCEMTLDKTLYAKTSSKARTDNVFWGENFEFMMLPKIDEVCVSLFRESDSKKKKDTLIGYVTIGIDQLSSRSPVERWYTVNTSHSDSGTSRIASALGGKSSSQESPSLRIKARWQSVHILPLRAYDNLLETLCYNYLPLCEQLEPVLNVRDKEDLATSLVRVMYKHNLAKEFLCDLIMKEVEKLDNDHLMFRGNTLATKAMESFMKLVADDYLDSTLSDFIKTVLQCEDSCEVDPQKLGNVSNSSLEKNRALLMRYVEVAWTKILNNVHQLPKNLRDVFSALRCRLEAQNREALADTLISSSIFLRFLCPAILSPSLFNLVSEYPSPTNARNLTLIAKTLQNLANFSKFGGKEPHMEFMNEFVDREWHRMKDFLLRISSESKSGPEKNADAIVDAGKELSLIATYLEEAWTPLLQEKNGNKHPLSNVKSVLSELAECKRRSDNGVFHSPMVQQPSSDYENSPQQHVVPRHENVPAYRSTPPTGQATVLGRSTNRPATHLLTSDDYVLSSAFQTPSLRPGGTRLSDETGTSSSRTSDKTTSSAEIRDDTDSDFELREDRGRGGRNRKRLPRTDASPSSSQQASSGYLSNNPSRSSYSNSSSSSPVERMAALSIANPVFGPGPSSGYAIPAEPKEIVYQKRASPPPYDPDVHNYHYQPMQVYAVPPDCQVSPRTQATGGVNAQNRLSLPRTNPRASRNSTLLRPSVVNVPDDWDRTSDYWRDRGENNYRSQLESQVESQAREIERLMRENIELKSKMMSSTKTVDSKRSDSGASEDSYDSLSSLDRPSRQSLVVVPN.

2 disordered regions span residues 1 to 29 and 221 to 316; these read MKVI…SCTK and RMSS…GSLR. Positions 40 to 383 constitute a PH domain; the sequence is PPICHGWLIV…WMENLRKTMN (344 aa). The segment covering 223–236 has biased composition (low complexity); sequence SSSSHNLSTRLSGS. Polar residues-rich tracts occupy residues 237–247 and 286–297; these read TQNLNQPTNAY and ASNTPSRDSSLY. The region spanning 374 to 490 is the C2 domain; it reads WMENLRKTMN…SSRSPVERWY (117 aa). The span at 495 to 504 shows a compositional bias: polar residues; the sequence is SHSDSGTSRI. Residues 495-516 form a disordered region; the sequence is SHSDSGTSRIASALGGKSSSQE. Residues 579 to 789 enclose the Ras-GAP domain; that stretch reads NLAKEFLCDL…HRMKDFLLRI (211 aa). Disordered stretches follow at residues 856 to 903, 923 to 1013, 1086 to 1107, and 1163 to 1207; these read GVFH…LGRS, FQTP…SSSS, ATGG…RASR, and LKSK…VVPN. Composition is skewed to polar residues over residues 862–876 and 891–903; these read MVQQ…SPQQ and TPPT…LGRS. Over residues 939-953 the composition is skewed to low complexity; that stretch reads TGTSSSRTSDKTTSS. Residues 955–972 show a composition bias toward basic and acidic residues; that stretch reads EIRDDTDSDFELREDRGR. The span at 985-1013 shows a compositional bias: low complexity; the sequence is ASPSSSQQASSGYLSNNPSRSSYSNSSSS. Over residues 1181-1207 the composition is skewed to low complexity; it reads SGASEDSYDSLSSLDRPSRQSLVVVPN.

As to expression, mainly expressed in gonads and vulval cells. Isoform c in expressed in pharyngeal epithelial cells and several rectal/blast cells in the tail region. Isoform f is weakly expressed in four cells symmetrically located in the vulval region. Isoform g is strongly expressed in the pharyngeal muscle cells m6 in addition to several cells in the tail region.

It localises to the cytoplasm. In terms of biological role, GTPase-activating protein, which acts as a negative regulator for the member of the Ras family let-60. Probably decreases the signaling activity of Ras by stimulating its intrinsic GTPase activity, thereby lowering the levels of GTP-bound, active Ras. The different isoforms may play a distinct role in specific tissues. This is Ras GTPase-activating protein gap-2 (gap-2) from Caenorhabditis elegans.